The sequence spans 351 residues: N-acetyl-gamma-glutamyl-phosphate reductase (351 aa).

C154 is a catalytic residue.

The protein belongs to the NAGSA dehydrogenase family. Type 1 subfamily.

Its subcellular location is the cytoplasm. The enzyme catalyses N-acetyl-L-glutamate 5-semialdehyde + phosphate + NADP(+) = N-acetyl-L-glutamyl 5-phosphate + NADPH + H(+). It participates in amino-acid biosynthesis; L-arginine biosynthesis; N(2)-acetyl-L-ornithine from L-glutamate: step 3/4. Catalyzes the NADPH-dependent reduction of N-acetyl-5-glutamyl phosphate to yield N-acetyl-L-glutamate 5-semialdehyde. The polypeptide is N-acetyl-gamma-glutamyl-phosphate reductase (Prochlorococcus marinus (strain MIT 9515)).